Consider the following 240-residue polypeptide: UDP-2,3-diacylglucosamine hydrolase (240 aa).

Positions 8, 10, 41, 79, and 114 each coordinate Mn(2+). Residue 79–80 participates in substrate binding; it reads NR. Positions 122, 160, 164, 167, and 195 each coordinate substrate. Residues histidine 195 and histidine 197 each coordinate Mn(2+).

Belongs to the LpxH family. Requires Mn(2+) as cofactor.

It is found in the cell inner membrane. It catalyses the reaction UDP-2-N,3-O-bis[(3R)-3-hydroxytetradecanoyl]-alpha-D-glucosamine + H2O = 2-N,3-O-bis[(3R)-3-hydroxytetradecanoyl]-alpha-D-glucosaminyl 1-phosphate + UMP + 2 H(+). Its pathway is glycolipid biosynthesis; lipid IV(A) biosynthesis; lipid IV(A) from (3R)-3-hydroxytetradecanoyl-[acyl-carrier-protein] and UDP-N-acetyl-alpha-D-glucosamine: step 4/6. Functionally, hydrolyzes the pyrophosphate bond of UDP-2,3-diacylglucosamine to yield 2,3-diacylglucosamine 1-phosphate (lipid X) and UMP by catalyzing the attack of water at the alpha-P atom. Involved in the biosynthesis of lipid A, a phosphorylated glycolipid that anchors the lipopolysaccharide to the outer membrane of the cell. The protein is UDP-2,3-diacylglucosamine hydrolase of Salmonella newport (strain SL254).